Consider the following 266-residue polypeptide: Cytochrome c oxidase subunit 2 (266 aa).

Residues 1–43 (MTITNYINNQFTFLDMAEPWQLGFQDPATPVMEGIINFHHDLM) are Mitochondrial intermembrane-facing. The chain crosses the membrane as a helical span at residues 44–64 (FFLISIVVFVCWMLFRVITLF). Residues 65–82 (DEKKNKIPATVVHGATIE) are Mitochondrial matrix-facing. Residues 83–103 (IIWTSIPALILLTVAVPSFAL) form a helical membrane-spanning segment. Residues 104–266 (LYSMDEVIDP…NVXLIKFYGI (163 aa)) are Mitochondrial intermembrane-facing. Cu cation is bound by residues histidine 186, cysteine 221, glutamate 223, cysteine 225, histidine 229, and methionine 232. Position 223 (glutamate 223) interacts with Mg(2+).

Belongs to the cytochrome c oxidase subunit 2 family. As to quaternary structure, component of the cytochrome c oxidase (complex IV, CIV), a multisubunit enzyme composed of a catalytic core of 3 subunits and several supernumerary subunits. The complex exists as a monomer or a dimer and forms supercomplexes (SCs) in the inner mitochondrial membrane with ubiquinol-cytochrome c oxidoreductase (cytochrome b-c1 complex, complex III, CIII). It depends on Cu cation as a cofactor.

Its subcellular location is the mitochondrion inner membrane. The enzyme catalyses 4 Fe(II)-[cytochrome c] + O2 + 8 H(+)(in) = 4 Fe(III)-[cytochrome c] + 2 H2O + 4 H(+)(out). Component of the cytochrome c oxidase, the last enzyme in the mitochondrial electron transport chain which drives oxidative phosphorylation. The respiratory chain contains 3 multisubunit complexes succinate dehydrogenase (complex II, CII), ubiquinol-cytochrome c oxidoreductase (cytochrome b-c1 complex, complex III, CIII) and cytochrome c oxidase (complex IV, CIV), that cooperate to transfer electrons derived from NADH and succinate to molecular oxygen, creating an electrochemical gradient over the inner membrane that drives transmembrane transport and the ATP synthase. Cytochrome c oxidase is the component of the respiratory chain that catalyzes the reduction of oxygen to water. Electrons originating from reduced cytochrome c in the intermembrane space (IMS) are transferred via the dinuclear copper A center (CU(A)) of subunit 2 and heme A of subunit 1 to the active site in subunit 1, a binuclear center (BNC) formed by heme A3 and copper B (CU(B)). The BNC reduces molecular oxygen to 2 water molecules using 4 electrons from cytochrome c in the IMS and 4 protons from the mitochondrial matrix. This chain is Cytochrome c oxidase subunit 2 (COX2), found in Phytophthora megasperma (Potato pink rot fungus).